The primary structure comprises 131 residues: MKKHGVLNSEIASVLASLGHTDTIVIADCGLPIPAGVKRIDLAVEIGKPSFLDVLQVVADDMAIEKVTLAEEVINNNAEVNKEIELKLIEPAFEYVCHEQFKEHTKKAKAIIRTGEATPYANVILHAGVIF.

H20 serves as the catalytic Proton donor. Residues D28, H98, and 120-122 (YAN) each bind substrate.

Belongs to the RbsD / FucU family. RbsD subfamily. As to quaternary structure, homodecamer.

Its subcellular location is the cytoplasm. The catalysed reaction is beta-D-ribopyranose = beta-D-ribofuranose. It participates in carbohydrate metabolism; D-ribose degradation; D-ribose 5-phosphate from beta-D-ribopyranose: step 1/2. In terms of biological role, catalyzes the interconversion of beta-pyran and beta-furan forms of D-ribose. This is D-ribose pyranase from Bacillus cereus (strain 03BB102).